Consider the following 1088-residue polypeptide: DNA polymerase delta catalytic subunit (1088 aa).

This sequence belongs to the DNA polymerase type-B family. In terms of assembly, heterodimer with subunits of 125 kDa and 50 kDa. The 125 kDa subunit contains the polymerase active site and most likely the active site for the 3'-5' exonuclease activity.

It is found in the nucleus. It catalyses the reaction DNA(n) + a 2'-deoxyribonucleoside 5'-triphosphate = DNA(n+1) + diphosphate. Its function is as follows. This polymerase possesses two enzymatic activities: DNA synthesis (polymerase) and an exonucleolytic activity that degrades single-stranded DNA in the 3'- to 5'-direction. The polypeptide is DNA polymerase delta catalytic subunit (POLD1) (Glycine max (Soybean)).